Reading from the N-terminus, the 122-residue chain is Large ribosomal subunit protein uL14c (122 aa).

Belongs to the universal ribosomal protein uL14 family. Part of the 50S ribosomal subunit.

The protein resides in the plastid. Its subcellular location is the chloroplast. In terms of biological role, binds to 23S rRNA. The polypeptide is Large ribosomal subunit protein uL14c (Amborella trichopoda).